The sequence spans 506 residues: UDP-N-acetylmuramoyl-L-alanyl-D-glutamate--2,6-diaminopimelate ligase (506 aa).

Ser42 lines the UDP-N-acetyl-alpha-D-muramoyl-L-alanyl-D-glutamate pocket. 125–131 serves as a coordination point for ATP; it reads GTSGKTT. UDP-N-acetyl-alpha-D-muramoyl-L-alanyl-D-glutamate is bound by residues 166–167, Ser193, and Arg201; that span reads TT. Lys233 carries the post-translational modification N6-carboxylysine. Residues Arg395, 419–422, Gly475, and Glu479 each bind meso-2,6-diaminopimelate; that span reads DNPR. The Meso-diaminopimelate recognition motif motif lies at 419-422; sequence DNPR.

It belongs to the MurCDEF family. MurE subfamily. Requires Mg(2+) as cofactor. Post-translationally, carboxylation is probably crucial for Mg(2+) binding and, consequently, for the gamma-phosphate positioning of ATP.

The protein localises to the cytoplasm. It catalyses the reaction UDP-N-acetyl-alpha-D-muramoyl-L-alanyl-D-glutamate + meso-2,6-diaminopimelate + ATP = UDP-N-acetyl-alpha-D-muramoyl-L-alanyl-gamma-D-glutamyl-meso-2,6-diaminopimelate + ADP + phosphate + H(+). It participates in cell wall biogenesis; peptidoglycan biosynthesis. Its function is as follows. Catalyzes the addition of meso-diaminopimelic acid to the nucleotide precursor UDP-N-acetylmuramoyl-L-alanyl-D-glutamate (UMAG) in the biosynthesis of bacterial cell-wall peptidoglycan. The chain is UDP-N-acetylmuramoyl-L-alanyl-D-glutamate--2,6-diaminopimelate ligase from Streptomyces avermitilis (strain ATCC 31267 / DSM 46492 / JCM 5070 / NBRC 14893 / NCIMB 12804 / NRRL 8165 / MA-4680).